The sequence spans 25 residues: C-type natriuretic peptide (25 aa).

A disulfide bond links Cys-9 and Cys-25.

Venom gland.

It is found in the secreted. Its function is as follows. Snake venom natriuretic peptide that has a vasorelaxant activity in rat aortic strips and a diuretic potency in anesthetized rats. May act by activating natriuretic receptors (NPR1 and/or NPR2). The chain is C-type natriuretic peptide from Crotalus atrox (Western diamondback rattlesnake).